Consider the following 86-residue polypeptide: High affinity immunoglobulin epsilon receptor subunit gamma (86 aa).

Positions 1–18 (MIPAVVLLLLLLVEQAAA) are cleaved as a signal peptide. Over 19 to 23 (LGEPQ) the chain is Extracellular. Residues 24–44 (LCYILDAILFLYGIVLTLLYC) traverse the membrane as a helical segment. Topologically, residues 45–86 (RLKLQVRKAAIDSYEKSDGVYTGLSTRNQETYETLKHEKPPQ) are cytoplasmic. Residues 54 to 82 (AIDSYEKSDGVYTGLSTRNQETYETLKHE) form the ITAM domain. Tyr-65 is subject to Phosphotyrosine. The residue at position 69 (Ser-69) is a Phosphoserine. Residue Tyr-76 is modified to Phosphotyrosine. Phosphothreonine is present on Thr-78.

The protein belongs to the CD3Z/FCER1G family. As to quaternary structure, igE Fc receptor is a tetramer of an alpha chain, a beta chain, and two disulfide linked gamma chains. Associates with FCGR1A; forms a functional signaling complex. The signaling subunit of immunoglobulin gamma (IgG) Fc receptor complex. As a homodimer or a heterodimer of CD247 and FCER1G, associates with the ligand binding subunit FCGR3A to form a functional receptor complex. Associates with CLEC6A. Interacts with CLEC4E. Interacts (via ITAM domain) with SYK (via SH2 domains); activates SYK, enabling integrin-mediated activation of neutrophils and macrophages. Interacts with common beta chain of interleukin 3 receptor CSF2RB and recruits SYK in response to IL3 stimulation; this interaction is direct. Interacts with CD300LH; the interaction may be indirect. Interacts with CD300LD. Interacts with TARM1.

The protein localises to the cell membrane. Functionally, adapter protein containing an immunoreceptor tyrosine-based activation motif (ITAM) that transduces activation signals from various immunoreceptors. As a component of the high-affinity immunoglobulin E (IgE) receptor, mediates allergic inflammatory signaling in mast cells. As a constitutive component of interleukin-3 receptor complex, selectively mediates interleukin 4/IL4 production b basophils priming T-cells toward effector T-helper 2 subset. Associates with pattern recognition receptors CLEC4D and CLEC4E to form a functional signaling complex in myeloid cells. Binding of mycobacterial trehalose 6,6'-dimycolate (TDM) to this receptor complex leads to phosphorylation of ITAM, triggering activation of SYK, CARD9 and NF-kappa-B, consequently driving maturation of antigen-presenting cells and shaping antigen-specific priming of T-cells toward effector T-helper 1 and T-helper 17 cell subtypes. May function cooperatively with other activating receptors. Functionally linked to integrin beta-2/ITGB2-mediated neutrophil activation. Also involved in integrin alpha-2/ITGA2-mediated platelet activation. This is High affinity immunoglobulin epsilon receptor subunit gamma (FCER1G) from Sus scrofa (Pig).